Reading from the N-terminus, the 264-residue chain is Thymidylate synthase (264 aa).

Arg-21 is a dUMP binding site. His-51 is a (6R)-5,10-methylene-5,6,7,8-tetrahydrofolate binding site. Residue 126 to 127 coordinates dUMP; the sequence is RR. The active-site Nucleophile is the Cys-146. DUMP-binding positions include 166 to 169, Asn-177, and 207 to 209; these read RSCD and HLY. Residue Asp-169 participates in (6R)-5,10-methylene-5,6,7,8-tetrahydrofolate binding. Ala-263 serves as a coordination point for (6R)-5,10-methylene-5,6,7,8-tetrahydrofolate.

Belongs to the thymidylate synthase family. Bacterial-type ThyA subfamily. Homodimer.

It is found in the cytoplasm. It catalyses the reaction dUMP + (6R)-5,10-methylene-5,6,7,8-tetrahydrofolate = 7,8-dihydrofolate + dTMP. It participates in pyrimidine metabolism; dTTP biosynthesis. Catalyzes the reductive methylation of 2'-deoxyuridine-5'-monophosphate (dUMP) to 2'-deoxythymidine-5'-monophosphate (dTMP) while utilizing 5,10-methylenetetrahydrofolate (mTHF) as the methyl donor and reductant in the reaction, yielding dihydrofolate (DHF) as a by-product. This enzymatic reaction provides an intracellular de novo source of dTMP, an essential precursor for DNA biosynthesis. The polypeptide is Thymidylate synthase (Aeromonas salmonicida (strain A449)).